A 286-amino-acid chain; its full sequence is 4-hydroxybenzoate octaprenyltransferase (286 aa).

8 helical membrane-spanning segments follow: residues 20-40 (IGTL…AQGL), 43-63 (IKVL…GCII), 96-116 (LFTL…PLVV), 142-162 (FLGI…LGEV), 167-187 (WWLF…YAIV), 210-230 (QIIG…GLVA), 235-255 (IYGL…RLIF), and 266-286 (FLNN…DYMI).

Belongs to the UbiA prenyltransferase family. Mg(2+) serves as cofactor.

It localises to the cell inner membrane. It catalyses the reaction all-trans-octaprenyl diphosphate + 4-hydroxybenzoate = 4-hydroxy-3-(all-trans-octaprenyl)benzoate + diphosphate. The protein operates within cofactor biosynthesis; ubiquinone biosynthesis. In terms of biological role, catalyzes the prenylation of para-hydroxybenzoate (PHB) with an all-trans polyprenyl group. Mediates the second step in the final reaction sequence of ubiquinone-8 (UQ-8) biosynthesis, which is the condensation of the polyisoprenoid side chain with PHB, generating the first membrane-bound Q intermediate 3-octaprenyl-4-hydroxybenzoate. In Shewanella frigidimarina (strain NCIMB 400), this protein is 4-hydroxybenzoate octaprenyltransferase.